Reading from the N-terminus, the 464-residue chain is MTLRLFDTETRALRDFVPLAPGHASVYLCGATVQGDPHIGHVRSGVAFDVLRRWLLAHDYDVAFVRNVTDIEDKILNKAAEAGRPWWEWAATFERSFTWAYQQLGVLPPSVEPRATGHITQMVEMMQRLIDNGHAYAAGGDVYFDVRSYPRYGSLSGHKLDDVHQGESAGECKRDPRDFTLWKAEKPGEPSWPTPWGRGRPGWHLECSAMAEFYLGAAFDIHCGGLDLVFPHHENEIAQAKCAGDDFAQYWLHNGWVTMGGEKMSKSLGNVLSVPNVLKKVRPQELRYYLGSAHYRSMLEYSDTALDEGAAAFRRIESFVLRTQERAGEVPVGLWTEAFARALDDDLAVPAALAEVHGKVREGNIALDGGDLEGARGIASQVRAMLGILGVDPLDEHWTQETADASAATDALDVLVRAELERRQSARAEKNWAVADEVRDRLIRAGIEVTDTPNGPEWSLKAGQ.

Position 29 (C29) interacts with Zn(2+). A 'HIGH' region motif is present at residues 31 to 41 (ATVQGDPHIGH). C207, H232, and E236 together coordinate Zn(2+). Positions 263–267 (KMSKS) match the 'KMSKS' region motif. K266 contacts ATP.

Belongs to the class-I aminoacyl-tRNA synthetase family. Monomer. Zn(2+) serves as cofactor.

It localises to the cytoplasm. It carries out the reaction tRNA(Cys) + L-cysteine + ATP = L-cysteinyl-tRNA(Cys) + AMP + diphosphate. This Rhodococcus jostii (strain RHA1) protein is Cysteine--tRNA ligase.